Reading from the N-terminus, the 297-residue chain is UTP--glucose-1-phosphate uridylyltransferase YngB (297 aa).

Positions 1-27 (MRKKVRKAVIPAAGLGTRFLPATKAQP) are cleaved as a signal peptide.

Belongs to the UDPGP type 2 family. In terms of assembly, homodimer.

It catalyses the reaction alpha-D-glucose 1-phosphate + UTP + H(+) = UDP-alpha-D-glucose + diphosphate. The protein operates within glycolipid metabolism; diglucosyl-diacylglycerol biosynthesis. In terms of biological role, catalyzes the formation of UDP-glucose from glucose-1-phosphate and UTP. This is an intermediate step in the biosynthesis of diglucosyl-diacylglycerol (Glc2-DAG), i.e. the predominant glycolipid found in B.subtilis membrane, which is also used as a membrane anchor for lipoteichoic acid (LTA). YngB contributes to wall teichoic acid (WTA) glucosylation and glycolipid formation under anaerobic fermentative growth conditions. Might also enter other glycosylation pathways, leading to the decorating of other cell envelope components with glucose residues under anaerobic or other growth conditions. This chain is UTP--glucose-1-phosphate uridylyltransferase YngB (yngB), found in Bacillus subtilis (strain 168).